The primary structure comprises 143 residues: 3-hydroxyacyl-[acyl-carrier-protein] dehydratase FabZ (143 aa).

The active site involves His-47.

Belongs to the thioester dehydratase family. FabZ subfamily.

It is found in the cytoplasm. The enzyme catalyses a (3R)-hydroxyacyl-[ACP] = a (2E)-enoyl-[ACP] + H2O. In terms of biological role, involved in unsaturated fatty acids biosynthesis. Catalyzes the dehydration of short chain beta-hydroxyacyl-ACPs and long chain saturated and unsaturated beta-hydroxyacyl-ACPs. This chain is 3-hydroxyacyl-[acyl-carrier-protein] dehydratase FabZ, found in Moorella thermoacetica (strain ATCC 39073 / JCM 9320).